The following is a 584-amino-acid chain: Probable lysosomal cobalamin transporter (584 aa).

10 helical membrane-spanning segments follow: residues 8 to 28 (LIWIVYAIVVGILSIVASTFV), 46 to 66 (IFTLTALLATVLLLPVDVALV), 93 to 113 (TVVYYFLYSLDAVLCLLIVPF), 144 to 164 (TLVFILLTIILFLVGFFVPVA), 189 to 209 (ALTFALGLLIVMGIIVYVIYS), 313 to 333 (LLGGLLLLAISVMIWISMLLT), 350 to 370 (ILGKINIINPVNWVLVEAASV), 376 to 396 (VIFIVLVLHLFTSSVVGIATI), 421 to 441 (ATVMLTLITLALNYSISMIVV), and 509 to 529 (GIVDFWAQFVFLGFSLIVLLI).

The protein belongs to the LIMR family. LMBRD1 subfamily.

Its subcellular location is the lysosome membrane. Its function is as follows. Probable lysosomal cobalamin transporter. Required to export cobalamin from lysosomes allowing its conversion to cofactors. This chain is Probable lysosomal cobalamin transporter, found in Coccidioides immitis (strain RS) (Valley fever fungus).